The following is a 130-amino-acid chain: Small ribosomal subunit protein uS9 (130 aa).

It belongs to the universal ribosomal protein uS9 family.

The polypeptide is Small ribosomal subunit protein uS9 (Buchnera aphidicola subsp. Acyrthosiphon pisum (strain 5A)).